We begin with the raw amino-acid sequence, 223 residues long: Ribonuclease T (223 aa).

The Exonuclease domain occupies 20–194; it reads VVIDVETAGF…YDTERTAELF (175 aa). The Mg(2+) site is built by D23, E25, H181, and D186. The active-site Proton donor/acceptor is the H181.

The protein belongs to the RNase T family. In terms of assembly, homodimer. Requires Mg(2+) as cofactor.

Trims short 3' overhangs of a variety of RNA species, leaving a one or two nucleotide 3' overhang. Responsible for the end-turnover of tRNA: specifically removes the terminal AMP residue from uncharged tRNA (tRNA-C-C-A). Also appears to be involved in tRNA biosynthesis. The chain is Ribonuclease T from Shewanella sp. (strain W3-18-1).